The chain runs to 662 residues: PAN2-PAN3 deadenylation complex subunit PAN3 (662 aa).

Disordered regions lie at residues 1 to 29 and 53 to 133; these read MASA…NAKD and DPHK…DTVT. The C3H1-type zinc finger occupies 26 to 55; it reads NAKDTLCRNITIYGRCRYEDKGCAFNHDPH. The segment covering 75 to 102 has biased composition (low complexity); that stretch reads SFTPSLLSSNGSSPTSTPATTKKMTTIS. The segment covering 115–133 has biased composition (polar residues); sequence SVVSRSNASTPGLRQDTVT. The pseudokinase domain stretch occupies residues 263-525; it reads QTLPNTQLPA…NIDVFITGIS (263 aa). ATP is bound by residues Arg-315, 364-371, and 425-426; these read DYHPLSKT and SK. Positions 526 to 564 form a coiled coil; it reads SQLMSTFDSALHLDDQLTSDLSRELENGRLVRLMAKLNF. A knob domain region spans residues 565–662; that stretch reads VNERPEYEHD…ALMKPARRMH (98 aa).

The protein belongs to the protein kinase superfamily. PAN3 family. In terms of assembly, homodimer. Forms a heterotrimer with a catalytic subunit pan2 to form the poly(A)-nuclease (PAN) deadenylation complex. Interacts (via PAM-2 motif) with poly(A)-binding protein pab1 (via PABC domain), conferring substrate specificity of the enzyme complex.

It localises to the cytoplasm. Functionally, regulatory subunit of the poly(A)-nuclease (PAN) deadenylation complex, one of two cytoplasmic mRNA deadenylases involved in mRNA turnover. PAN specifically shortens poly(A) tails of RNA and the activity is stimulated by poly(A)-binding protein pab1. PAN deadenylation is followed by rapid degradation of the shortened mRNA tails by the CCR4-NOT complex. Deadenylated mRNAs are then degraded by two alternative mechanisms, namely exosome-mediated 3'-5' exonucleolytic degradation, or deadenylation-dependent mRNA decaping and subsequent 5'-3' exonucleolytic degradation by xrn1. May also be involved in post-transcriptional maturation of mRNA poly(A) tails. pan3 acts as a positive regulator for PAN activity, recruiting the catalytic subunit pan2 to mRNA via its interaction with RNA and with pab1. This is PAN2-PAN3 deadenylation complex subunit PAN3 from Aspergillus fumigatus (strain ATCC MYA-4609 / CBS 101355 / FGSC A1100 / Af293) (Neosartorya fumigata).